Here is a 253-residue protein sequence, read N- to C-terminus: Triosephosphate isomerase (253 aa).

Asparagine 9–lysine 11 contacts substrate. Catalysis depends on histidine 96, which acts as the Electrophile. The active-site Proton acceptor is glutamate 169. Residues glycine 175, serine 215, and glycine 236–glycine 237 each bind substrate.

It belongs to the triosephosphate isomerase family. As to quaternary structure, homodimer.

It localises to the cytoplasm. The enzyme catalyses D-glyceraldehyde 3-phosphate = dihydroxyacetone phosphate. It participates in carbohydrate biosynthesis; gluconeogenesis. Its pathway is carbohydrate degradation; glycolysis; D-glyceraldehyde 3-phosphate from glycerone phosphate: step 1/1. In terms of biological role, involved in the gluconeogenesis. Catalyzes stereospecifically the conversion of dihydroxyacetone phosphate (DHAP) to D-glyceraldehyde-3-phosphate (G3P). This is Triosephosphate isomerase from Borrelia garinii subsp. bavariensis (strain ATCC BAA-2496 / DSM 23469 / PBi) (Borreliella bavariensis).